The primary structure comprises 164 residues: Putative 4-hydroxy-4-methyl-2-oxoglutarate aldolase (164 aa).

Substrate contacts are provided by residues G79–L82 and R101. An a divalent metal cation-binding site is contributed by D102.

It belongs to the class II aldolase/RraA-like family. As to quaternary structure, homotrimer. A divalent metal cation is required as a cofactor.

The catalysed reaction is 4-hydroxy-4-methyl-2-oxoglutarate = 2 pyruvate. It carries out the reaction oxaloacetate + H(+) = pyruvate + CO2. Catalyzes the aldol cleavage of 4-hydroxy-4-methyl-2-oxoglutarate (HMG) into 2 molecules of pyruvate. Also contains a secondary oxaloacetate (OAA) decarboxylase activity due to the common pyruvate enolate transition state formed following C-C bond cleavage in the retro-aldol and decarboxylation reactions. This chain is Putative 4-hydroxy-4-methyl-2-oxoglutarate aldolase, found in Halorhodospira halophila (strain DSM 244 / SL1) (Ectothiorhodospira halophila (strain DSM 244 / SL1)).